The primary structure comprises 420 residues: Acetyl-CoA acetyltransferase, mitochondrial (420 aa).

The transit peptide at 1 to 26 (MTSRALYSTRSQLCRHLAHKYLSRSY) directs the protein to the mitochondrion. The active-site Acyl-thioester intermediate is Cys-119. CoA contacts are provided by residues Tyr-212, 251–253 (KVD), and Lys-256. Tyr-212 contacts K(+). 3 residues coordinate K(+): Ala-273, Ala-274, and Ala-276. Ser-277 serves as a coordination point for CoA. Residue Val-374 coordinates K(+). Cys-406 acts as the Proton donor/acceptor in catalysis.

It belongs to the thiolase-like superfamily. Thiolase family. In terms of assembly, homotetramer.

It is found in the mitochondrion. It catalyses the reaction 2 acetyl-CoA = acetoacetyl-CoA + CoA. The catalysed reaction is propanoyl-CoA + acetyl-CoA = 2-methyl-3-oxobutanoyl-CoA + CoA. It participates in lipid metabolism; fatty acid beta-oxidation. This is one of the enzymes that catalyzes the last step of the mitochondrial beta-oxidation pathway, an aerobic process breaking down fatty acids into acetyl-CoA. Using free coenzyme A/CoA, catalyzes the thiolytic cleavage of medium- to long-chain 3-oxoacyl-CoAs into acetyl-CoA and a fatty acyl-CoA shortened by two carbon atoms. The activity of the enzyme is reversible and it can also catalyze the condensation of two acetyl-CoA molecules into acetoacetyl-CoA. Thereby, it plays a major role in ketone body metabolism. The sequence is that of Acetyl-CoA acetyltransferase, mitochondrial (acat1) from Danio rerio (Zebrafish).